Reading from the N-terminus, the 506-residue chain is Probable lipid II flippase MurJ (506 aa).

13 consecutive transmembrane segments (helical) span residues 4–24, 86–106, 127–147, 153–173, 181–201, 232–252, 263–283, 308–328, 345–365, 377–397, 405–425, 436–456, and 474–494; these read YVVS…MGFV, TVIT…IIFA, VFGY…FVSV, IFFI…LSIF, IYSA…IPFA, IFGF…ASTL, AVVY…TVIF, ILLL…DYIL, TASV…FGFF, TPFY…VFGI, LALA…FIIL, ILFV…IYFF, and LMAA…VLGI.

Belongs to the MurJ/MviN family.

It is found in the cell inner membrane. It functions in the pathway cell wall biogenesis; peptidoglycan biosynthesis. Its function is as follows. Involved in peptidoglycan biosynthesis. Transports lipid-linked peptidoglycan precursors from the inner to the outer leaflet of the cytoplasmic membrane. The polypeptide is Probable lipid II flippase MurJ (Borreliella burgdorferi (strain ATCC 35210 / DSM 4680 / CIP 102532 / B31) (Borrelia burgdorferi)).